A 122-amino-acid polypeptide reads, in one-letter code: Biogenesis of lysosome-related organelles complex 1 subunit CNL1 (122 aa).

A compositionally biased stretch (basic and acidic residues) spans 1 to 10 (MQDNSSHSRE). The disordered stretch occupies residues 1–21 (MQDNSSHSRESASAGDDPLGI). Residues 63–95 (ENTIDKNIAKFKELLEKCDTLENHYEMLNQLAI) are a coiled coil.

This sequence belongs to the BLOC1S4 family. Component of the biogenesis of lysosome-related organelles complex-1 (BLOC-1) composed of at least BLI1, BLS1, CNL1, KXD1, SNN1 and VAB2.

The protein resides in the cytoplasm. Component of the biogenesis of lysosome-related organelles complex-1 (BLOC-1), a complex that is involved in endosomal cargo sorting. This Saccharomyces cerevisiae (strain RM11-1a) (Baker's yeast) protein is Biogenesis of lysosome-related organelles complex 1 subunit CNL1 (CLN1).